The chain runs to 228 residues: tRNA (guanine-N(1)-)-methyltransferase (228 aa).

Residues G111 and 131 to 136 (IGDFIL) contribute to the S-adenosyl-L-methionine site.

Belongs to the RNA methyltransferase TrmD family. In terms of assembly, homodimer.

The protein localises to the cytoplasm. It carries out the reaction guanosine(37) in tRNA + S-adenosyl-L-methionine = N(1)-methylguanosine(37) in tRNA + S-adenosyl-L-homocysteine + H(+). In terms of biological role, specifically methylates guanosine-37 in various tRNAs. The sequence is that of tRNA (guanine-N(1)-)-methyltransferase from Pelagibacter ubique (strain HTCC1062).